Consider the following 119-residue polypeptide: Phosphoribosyl-AMP cyclohydrolase (119 aa).

D72 is a binding site for Mg(2+). C73 provides a ligand contact to Zn(2+). D74 and D76 together coordinate Mg(2+). The Zn(2+) site is built by C89 and C96.

The protein belongs to the PRA-CH family. In terms of assembly, homodimer. Mg(2+) serves as cofactor. Zn(2+) is required as a cofactor.

It is found in the cytoplasm. It catalyses the reaction 1-(5-phospho-beta-D-ribosyl)-5'-AMP + H2O = 1-(5-phospho-beta-D-ribosyl)-5-[(5-phospho-beta-D-ribosylamino)methylideneamino]imidazole-4-carboxamide. The protein operates within amino-acid biosynthesis; L-histidine biosynthesis; L-histidine from 5-phospho-alpha-D-ribose 1-diphosphate: step 3/9. Functionally, catalyzes the hydrolysis of the adenine ring of phosphoribosyl-AMP. This chain is Phosphoribosyl-AMP cyclohydrolase, found in Methanocella arvoryzae (strain DSM 22066 / NBRC 105507 / MRE50).